The sequence spans 612 residues: Glutamine--fructose-6-phosphate aminotransferase [isomerizing] (612 aa).

The Nucleophile; for GATase activity role is filled by C2. Positions 2–221 (CGIVGIVSQR…NGDIAEITNS (220 aa)) constitute a Glutamine amidotransferase type-2 domain. 2 SIS domains span residues 289 to 429 (FNKT…IRKI) and 461 to 602 (LVKN…VDHP). K607 (for Fru-6P isomerization activity) is an active-site residue.

As to quaternary structure, homodimer.

It localises to the cytoplasm. It carries out the reaction D-fructose 6-phosphate + L-glutamine = D-glucosamine 6-phosphate + L-glutamate. In terms of biological role, catalyzes the first step in hexosamine metabolism, converting fructose-6P into glucosamine-6P using glutamine as a nitrogen source. The chain is Glutamine--fructose-6-phosphate aminotransferase [isomerizing] from Wigglesworthia glossinidia brevipalpis.